A 141-amino-acid polypeptide reads, in one-letter code: Endoribonuclease YbeY (141 aa).

Zn(2+) is bound by residues histidine 105, histidine 109, and aspartate 115.

Belongs to the endoribonuclease YbeY family. Zn(2+) serves as cofactor.

The protein localises to the cytoplasm. In terms of biological role, single strand-specific metallo-endoribonuclease involved in late-stage 70S ribosome quality control and in maturation of the 3' terminus of the 16S rRNA. This chain is Endoribonuclease YbeY, found in Chloroherpeton thalassium (strain ATCC 35110 / GB-78).